Here is a 61-residue protein sequence, read N- to C-terminus: Large ribosomal subunit protein uL30 (61 aa).

It belongs to the universal ribosomal protein uL30 family. Part of the 50S ribosomal subunit.

This Petrotoga mobilis (strain DSM 10674 / SJ95) protein is Large ribosomal subunit protein uL30.